A 29-amino-acid chain; its full sequence is Galanin (29 aa).

A29 is subject to Alanine amide.

The protein belongs to the galanin family.

The protein localises to the secreted. Its function is as follows. Contracts smooth muscle of the gastrointestinal and genitourinary tract, regulates growth hormone release, modulates insulin release, and may be involved in the control of adrenal secretion. The chain is Galanin (gal) from Oncorhynchus mykiss (Rainbow trout).